The chain runs to 354 residues: Ornithine transcarbamylase, mitochondrial (354 aa).

Residues 1–32 (MLSNLRILLNKAALRKAHTSMVRNFRYGKPVQ) constitute a mitochondrion transit peptide. N6-acetyllysine; alternate is present on Lys70. Residue Lys70 is modified to N6-succinyllysine; alternate. Lys80 is subject to N6-succinyllysine. N6-acetyllysine; alternate is present on Lys88. N6-succinyllysine; alternate is present on Lys88. Carbamoyl phosphate is bound at residue 90-93 (STRT). Ser133 bears the Phosphoserine mark. Arg141 contributes to the carbamoyl phosphate binding site. Lys144 bears the N6-acetyllysine; alternate mark. Position 144 is an N6-succinyllysine; alternate (Lys144). 2 residues coordinate carbamoyl phosphate: His168 and Gln171. Position 199 (Asn199) interacts with L-ornithine. Lys221, Lys231, and Lys238 each carry N6-acetyllysine; alternate. Residues Lys221, Lys231, and Lys238 each carry the N6-succinyllysine; alternate modification. L-ornithine contacts are provided by Asp263, Ser267, and Met268. An N6-succinyllysine mark is found at Lys274 and Lys289. The residue at position 292 (Lys292) is an N6-acetyllysine; alternate. At Lys292 the chain carries N6-succinyllysine; alternate. The Proton acceptor role is filled by Cys303. A carbamoyl phosphate-binding site is contributed by 303 to 304 (CL). The residue at position 307 (Lys307) is an N6-acetyllysine; alternate. Lys307 is modified (N6-succinyllysine; alternate). Arg330 is a carbamoyl phosphate binding site.

The protein belongs to the aspartate/ornithine carbamoyltransferase superfamily. OTCase family. In terms of assembly, homotrimer. Post-translationally, acetylation at Lys-88 negatively regulates ornithine carbamoyltransferase activity in response to nutrient signals.

Its subcellular location is the mitochondrion matrix. It catalyses the reaction carbamoyl phosphate + L-ornithine = L-citrulline + phosphate + H(+). It participates in nitrogen metabolism; urea cycle; L-citrulline from L-ornithine and carbamoyl phosphate: step 1/1. Its activity is regulated as follows. Negatively regulated by lysine acetylation. Catalyzes the second step of the urea cycle, the condensation of carbamoyl phosphate with L-ornithine to form L-citrulline. The urea cycle ensures the detoxification of ammonia by converting it to urea for excretion. The polypeptide is Ornithine transcarbamylase, mitochondrial (Rattus norvegicus (Rat)).